Reading from the N-terminus, the 979-residue chain is Disks large-associated protein 3 (979 aa).

Residues 1–10 (MRGYHGDRGS) show a composition bias toward basic and acidic residues. Disordered stretches follow at residues 1–20 (MRGY…FADQ), 52–95 (AGLG…MYPG), 136–169 (FHTL…SPSR), 182–291 (AKSH…CLEG), 400–429 (AMGD…TRRS), and 537–581 (FRKA…RCSS). Ser58 bears the Phosphoserine mark. Residues 73–86 (PEGGPAGAGVGGGS) show a composition bias toward gly residues. A compositionally biased stretch (basic and acidic residues) spans 190-202 (PGKRDYNGPKAEG). Over residues 203-218 (RGGSGGDSYPGPGSGG) the composition is skewed to gly residues. A compositionally biased stretch (basic residues) spans 221-246 (TSHHHHHHHHHHHHQSRHGKRSKSKD). Phosphoserine is present on residues Ser406, Ser409, Ser412, and Ser416. Over residues 540–549 (APPPIPPGSQ) the composition is skewed to pro residues. 2 positions are modified to phosphoserine: Ser643 and Ser645. 2 disordered regions span residues 741–790 (EGYP…RASP) and 908–940 (EEKK…DRQR). 2 stretches are compositionally biased toward basic and acidic residues: residues 769-779 (GRRDSWIERGS) and 927-940 (PVKE…DRQR). 3 positions are modified to phosphoserine: Ser932, Ser935, and Ser967.

The protein belongs to the SAPAP family. Interacts with DLG4/PSD-95.

The protein localises to the cell membrane. Its subcellular location is the postsynaptic density. The protein resides in the synapse. Its function is as follows. May play a role in the molecular organization of synapses and neuronal cell signaling. Could be an adapter protein linking ion channel to the subsynaptic cytoskeleton. May induce enrichment of PSD-95/SAP90 at the plasma membrane. This chain is Disks large-associated protein 3 (DLGAP3), found in Homo sapiens (Human).